The sequence spans 146 residues: 16.0 kDa heat shock protein, peroxisomal (146 aa).

In terms of domain architecture, sHSP spans 23-143 (WASASATAAM…RPRTRPIAVS (121 aa)). Positions 144–146 (SKL) match the Microbody targeting signal motif.

The protein belongs to the small heat shock protein (HSP20) family. May form oligomeric structures.

Its subcellular location is the peroxisome. The sequence is that of 16.0 kDa heat shock protein, peroxisomal (HSP16.0) from Oryza sativa subsp. japonica (Rice).